Consider the following 222-residue polypeptide: Transcriptional regulatory protein BasR (222 aa).

A Response regulatory domain is found at 2 to 116 (KILIVEDDTL…ELHARIRALL (115 aa)). Asp51 is subject to 4-aspartylphosphate. Positions 124-218 (ESELIVGNLT…VRGFGYMLVA (95 aa)) form a DNA-binding region, ompR/PhoB-type.

As to quaternary structure, homodimer. Post-translationally, phosphorylated by BasS.

The protein resides in the cytoplasm. Functionally, member of the two-component regulatory system BasS/BasR. BasR induces the transcription of the ugd, ais, arnBCADTEF and eptA-basRS loci, all involved in resistance to polymyxin. This chain is Transcriptional regulatory protein BasR (basR), found in Escherichia coli (strain K12).